Here is a 216-residue protein sequence, read N- to C-terminus: Octanoyltransferase (216 aa).

The 184-residue stretch at 33 to 216 folds into the BPL/LPL catalytic domain; the sequence is AATADELWIV…ANRLSTSLSR (184 aa). Substrate-binding positions include 72-79, 148-150, and 162-164; these read RGGEVTYH, ALG, and GVS. Cys-180 functions as the Acyl-thioester intermediate in the catalytic mechanism.

It belongs to the LipB family.

It localises to the cytoplasm. The catalysed reaction is octanoyl-[ACP] + L-lysyl-[protein] = N(6)-octanoyl-L-lysyl-[protein] + holo-[ACP] + H(+). The protein operates within protein modification; protein lipoylation via endogenous pathway; protein N(6)-(lipoyl)lysine from octanoyl-[acyl-carrier-protein]: step 1/2. Its function is as follows. Catalyzes the transfer of endogenously produced octanoic acid from octanoyl-acyl-carrier-protein onto the lipoyl domains of lipoate-dependent enzymes. Lipoyl-ACP can also act as a substrate although octanoyl-ACP is likely to be the physiological substrate. The protein is Octanoyltransferase of Janthinobacterium sp. (strain Marseille) (Minibacterium massiliensis).